Consider the following 228-residue polypeptide: DOPA 4,5-dioxygenase (228 aa).

In terms of assembly, homodimer. Expressed at high level in coloured cap tissue and at least 10 times lower level in the stipe.

The protein resides in the cytoplasm. It participates in pigment biosynthesis; betalain biosynthesis. In terms of biological role, extradiol dioxygenase that opens up the cyclic ring of DOPA between carbons 4 and 5 thus producing an unstable seco-DOPA that rearranges non-enzymatically to betalamic acid. Can also catalyze the formation of muscaflavin (a pigment found in the hygrocybe mushrooms family and of some amanita species only) by a 2,3-extradiol cleavage of DOPA. The chain is DOPA 4,5-dioxygenase (DODA) from Amanita muscaria (Fly agaric).